The primary structure comprises 72 residues: UPF0352 protein NTHI1007 (72 aa).

The protein belongs to the UPF0352 family.

The sequence is that of UPF0352 protein NTHI1007 from Haemophilus influenzae (strain 86-028NP).